We begin with the raw amino-acid sequence, 496 residues long: NADP-dependent glyceraldehyde-3-phosphate dehydrogenase (496 aa).

Substrate-binding positions include arginine 116 and 169-170 (NY). NADP(+) is bound by residues lysine 192, threonine 195, and aspartate 230. Residue 245 to 249 (GGDTG) coordinates NAD(+). Glutamate 264 acts as the Proton acceptor in catalysis. 297 to 299 (RCT) serves as a coordination point for substrate. Cysteine 298 functions as the Nucleophile in the catalytic mechanism. Position 391 (glutamate 391) interacts with NADP(+). Arginine 451 provides a ligand contact to substrate.

It belongs to the aldehyde dehydrogenase family.

It is found in the cytoplasm. It carries out the reaction D-glyceraldehyde 3-phosphate + NADP(+) + H2O = (2R)-3-phosphoglycerate + NADPH + 2 H(+). Important as a means of generating NADPH for biosynthetic reactions. The chain is NADP-dependent glyceraldehyde-3-phosphate dehydrogenase (GAPN) from Nicotiana plumbaginifolia (Leadwort-leaved tobacco).